Reading from the N-terminus, the 58-residue chain is Arabinogalactan protein 21 (58 aa).

Positions 1-24 (MEAMKMKMMVFIMVVAVAFSAATA) are cleaved as a signal peptide. Pro30, Pro32, and Pro34 each carry 4-hydroxyproline. O-linked (Ara...) hydroxyproline glycans are attached at residues Pro30, Pro32, and Pro34. Ser36 carries the GPI-anchor amidated serine lipid modification. The propeptide at 37-58 (DAAMFVPALFASVVALASGFIF) is removed in mature form.

Belongs to the AG-peptide AGP family. Contains 4-hydroxyproline; hydroxylated on Pro-30, Pro-32 and Pro-34. Post-translationally, O-glycosylated on hydroxyprolines; noncontiguous hydroxylproline residues are glycosylated with arabinogalactan.

The protein resides in the cell membrane. Functionally, proteoglycan that seems to be implicated in diverse developmental roles such as differentiation, cell-cell recognition, embryogenesis and programmed cell death. The polypeptide is Arabinogalactan protein 21 (Arabidopsis thaliana (Mouse-ear cress)).